The following is a 164-amino-acid chain: ATP synthase subunit b 1 (164 aa).

Residues 8 to 28 form a helical membrane-spanning segment; it reads PETWVAVAFVILMGVFAYFGV.

This sequence belongs to the ATPase B chain family. As to quaternary structure, F-type ATPases have 2 components, F(1) - the catalytic core - and F(0) - the membrane proton channel. F(1) has five subunits: alpha(3), beta(3), gamma(1), delta(1), epsilon(1). F(0) has three main subunits: a(1), b(2) and c(10-14). The alpha and beta chains form an alternating ring which encloses part of the gamma chain. F(1) is attached to F(0) by a central stalk formed by the gamma and epsilon chains, while a peripheral stalk is formed by the delta and b chains.

It localises to the cell inner membrane. In terms of biological role, f(1)F(0) ATP synthase produces ATP from ADP in the presence of a proton or sodium gradient. F-type ATPases consist of two structural domains, F(1) containing the extramembraneous catalytic core and F(0) containing the membrane proton channel, linked together by a central stalk and a peripheral stalk. During catalysis, ATP synthesis in the catalytic domain of F(1) is coupled via a rotary mechanism of the central stalk subunits to proton translocation. Component of the F(0) channel, it forms part of the peripheral stalk, linking F(1) to F(0). The protein is ATP synthase subunit b 1 of Rhodopseudomonas palustris (strain BisB18).